We begin with the raw amino-acid sequence, 180 residues long: NADH-quinone oxidoreductase subunit I (180 aa).

4Fe-4S ferredoxin-type domains follow at residues 48 to 80 (IVLT…LQKS) and 90 to 119 (EFFR…LTPD). [4Fe-4S] cluster contacts are provided by C60, C63, C66, C70, C99, C102, C105, and C109. Over residues 161–174 (KPKGDAENEAKPID) the composition is skewed to basic and acidic residues. The segment at 161–180 (KPKGDAENEAKPIDVKSLLP) is disordered.

The protein belongs to the complex I 23 kDa subunit family. In terms of assembly, NDH-1 is composed of 13 different subunits. Subunits NuoA, H, J, K, L, M, N constitute the membrane sector of the complex. Requires [4Fe-4S] cluster as cofactor.

The protein localises to the cell inner membrane. It carries out the reaction a quinone + NADH + 5 H(+)(in) = a quinol + NAD(+) + 4 H(+)(out). In terms of biological role, NDH-1 shuttles electrons from NADH, via FMN and iron-sulfur (Fe-S) centers, to quinones in the respiratory chain. The immediate electron acceptor for the enzyme in this species is believed to be ubiquinone. Couples the redox reaction to proton translocation (for every two electrons transferred, four hydrogen ions are translocated across the cytoplasmic membrane), and thus conserves the redox energy in a proton gradient. The chain is NADH-quinone oxidoreductase subunit I from Shewanella oneidensis (strain ATCC 700550 / JCM 31522 / CIP 106686 / LMG 19005 / NCIMB 14063 / MR-1).